The chain runs to 61 residues: MRCLPVFVILLLLIASTPSVDARAKTRDDMSLASFHDDAKRILQILQDRSGCCVIDSNCCG.

Residues 1–22 (MRCLPVFVILLLLIASTPSVDA) form the signal peptide. The propeptide occupies 23–48 (RAKTRDDMSLASFHDDAKRILQILQD). Residue C60 is modified to Cysteine amide.

This sequence belongs to the conotoxin T superfamily. In terms of processing, contains 2 disulfide bonds that can be either 'C1-C3, C2-C4' or 'C1-C4, C2-C3', since these disulfide connectivities have been observed for conotoxins with cysteine framework V (for examples, see AC P0DQQ7 and AC P81755). In terms of tissue distribution, expressed by the venom duct.

The protein resides in the secreted. The chain is Conotoxin Tx-D021 from Conus textile (Cloth-of-gold cone).